The chain runs to 158 residues: UPF0225 protein PSEEN1229 (158 aa).

This sequence belongs to the UPF0225 family.

The sequence is that of UPF0225 protein PSEEN1229 from Pseudomonas entomophila (strain L48).